We begin with the raw amino-acid sequence, 296 residues long: Glycine--tRNA ligase alpha subunit (296 aa).

Belongs to the class-II aminoacyl-tRNA synthetase family. As to quaternary structure, tetramer of two alpha and two beta subunits.

The protein resides in the cytoplasm. The enzyme catalyses tRNA(Gly) + glycine + ATP = glycyl-tRNA(Gly) + AMP + diphosphate. This Listeria innocua serovar 6a (strain ATCC BAA-680 / CLIP 11262) protein is Glycine--tRNA ligase alpha subunit.